The sequence spans 198 residues: Recombination protein RecR (198 aa).

The C4-type zinc finger occupies 57 to 72 (CSVCGHITDQDPCYIC). The Toprim domain maps to 80 to 175 (SVICVVQDPK…KLSRIAHGLP (96 aa)).

This sequence belongs to the RecR family.

Its function is as follows. May play a role in DNA repair. It seems to be involved in an RecBC-independent recombinational process of DNA repair. It may act with RecF and RecO. This is Recombination protein RecR from Bacillus licheniformis (strain ATCC 14580 / DSM 13 / JCM 2505 / CCUG 7422 / NBRC 12200 / NCIMB 9375 / NCTC 10341 / NRRL NRS-1264 / Gibson 46).